A 249-amino-acid polypeptide reads, in one-letter code: Small ribosomal subunit protein uS3y (249 aa).

The region spanning 21–92 (LNEVLTRELA…SVELYAEKVN (72 aa)) is the KH type-2 domain. S212 bears the Phosphoserine mark.

It belongs to the universal ribosomal protein uS3 family.

In Arabidopsis thaliana (Mouse-ear cress), this protein is Small ribosomal subunit protein uS3y (RPS3B).